A 132-amino-acid polypeptide reads, in one-letter code: Small ribosomal subunit protein uS8 (132 aa).

It belongs to the universal ribosomal protein uS8 family. Part of the 30S ribosomal subunit. Contacts proteins S5 and S12.

Functionally, one of the primary rRNA binding proteins, it binds directly to 16S rRNA central domain where it helps coordinate assembly of the platform of the 30S subunit. The chain is Small ribosomal subunit protein uS8 from Lactobacillus acidophilus (strain ATCC 700396 / NCK56 / N2 / NCFM).